Here is a 110-residue protein sequence, read N- to C-terminus: Phosphoribosyl-AMP cyclohydrolase (110 aa).

A Mg(2+)-binding site is contributed by D80. Zn(2+) is bound at residue C81. The Mg(2+) site is built by D82 and D84. C97 and C104 together coordinate Zn(2+).

Belongs to the PRA-CH family. As to quaternary structure, homodimer. It depends on Mg(2+) as a cofactor. Zn(2+) serves as cofactor.

Its subcellular location is the cytoplasm. The enzyme catalyses 1-(5-phospho-beta-D-ribosyl)-5'-AMP + H2O = 1-(5-phospho-beta-D-ribosyl)-5-[(5-phospho-beta-D-ribosylamino)methylideneamino]imidazole-4-carboxamide. It participates in amino-acid biosynthesis; L-histidine biosynthesis; L-histidine from 5-phospho-alpha-D-ribose 1-diphosphate: step 3/9. In terms of biological role, catalyzes the hydrolysis of the adenine ring of phosphoribosyl-AMP. In Clostridium botulinum (strain Okra / Type B1), this protein is Phosphoribosyl-AMP cyclohydrolase.